The sequence spans 327 residues: GMP reductase (327 aa).

The active-site Thioimidate intermediate is C176. I205–V228 is an NADP(+) binding site.

The protein belongs to the IMPDH/GMPR family. GuaC type 2 subfamily.

It carries out the reaction IMP + NH4(+) + NADP(+) = GMP + NADPH + 2 H(+). In terms of biological role, catalyzes the irreversible NADPH-dependent deamination of GMP to IMP. It functions in the conversion of nucleobase, nucleoside and nucleotide derivatives of G to A nucleotides, and in maintaining the intracellular balance of A and G nucleotides. This is GMP reductase from Streptococcus equi subsp. equi (strain 4047).